The following is a 188-amino-acid chain: Adrenodoxin, mitochondrial (188 aa).

A mitochondrion-targeting transit peptide spans 1–64; it reads MAAAPGARLL…RPLSVSARAR (64 aa). The residue at position 67 (Ser67) is a Phosphoserine. Positions 69 to 175 constitute a 2Fe-2S ferredoxin-type domain; the sequence is DKITVHFKNR…NMTVRVPEAV (107 aa). An N6-acetyllysine; alternate modification is found at Lys70. N6-succinyllysine; alternate is present on Lys70. 4 residues coordinate [2Fe-2S] cluster: Cys110, Cys116, Cys119, and Cys156. N6-succinyllysine is present on Lys162. Ser181 carries the phosphoserine modification.

This sequence belongs to the adrenodoxin/putidaredoxin family. Interacts with CYP11A1. [2Fe-2S] cluster serves as cofactor.

Its subcellular location is the mitochondrion matrix. In terms of biological role, essential for the synthesis of various steroid hormones, participates in the reduction of mitochondrial cytochrome P450 for steroidogenesis. Transfers electrons from adrenodoxin reductase to CYP11A1, a cytochrome P450 that catalyzes cholesterol side-chain cleavage. Does not form a ternary complex with adrenodoxin reductase and CYP11A1 but shuttles between the two enzymes to transfer electrons. This is Adrenodoxin, mitochondrial (Fdx1) from Mus musculus (Mouse).